Consider the following 568-residue polypeptide: Putative ABC transporter ATP-binding protein CPE1583 (568 aa).

2 ABC transporter domains span residues isoleucine 7–glutamate 248 and leucine 303–lysine 536. Residues glycine 41–serine 48 and glycine 336–serine 343 each bind ATP.

The protein belongs to the ABC transporter superfamily.

It is found in the cell membrane. Functionally, probably part of an ABC transporter complex. Responsible for energy coupling to the transport system. This is Putative ABC transporter ATP-binding protein CPE1583 from Clostridium perfringens (strain 13 / Type A).